The primary structure comprises 308 residues: MEVYLAQPRGFCAGVVRAIEIVERALEKFGPPVYVRHEIVHNKYVVESLKNKGAIFVEELSEVPPKAVTVFSAHGVARSVEEEAAARDLPVLNATCPLVTKVHNQGKRYITKGRTLILIGHAGHPEVEGTMGQVPAPVLLVQSVEEVNALTLPADTPVAYITQTTLSVDDTRDIISALQARFTDIQGPDIRDICYATQNRQSAVRDLSKLVDVILVVGAANSSNSNRLREIGTEAGVASYLIADGSELNPEWLKDARTVGVTAGASAPEVLVDDVIEAMRRIGPVKVQVLPGREENIEFRLPAELAAS.

Cys-12 lines the [4Fe-4S] cluster pocket. Positions 41 and 74 each coordinate (2E)-4-hydroxy-3-methylbut-2-enyl diphosphate. 2 residues coordinate dimethylallyl diphosphate: His-41 and His-74. Isopentenyl diphosphate contacts are provided by His-41 and His-74. Cys-96 is a binding site for [4Fe-4S] cluster. His-124 lines the (2E)-4-hydroxy-3-methylbut-2-enyl diphosphate pocket. His-124 contacts dimethylallyl diphosphate. His-124 contributes to the isopentenyl diphosphate binding site. Catalysis depends on Glu-126, which acts as the Proton donor. Residue Thr-164 participates in (2E)-4-hydroxy-3-methylbut-2-enyl diphosphate binding. Cys-194 is a [4Fe-4S] cluster binding site. Residues Ser-222, Ser-223, Asn-224, and Ser-266 each coordinate (2E)-4-hydroxy-3-methylbut-2-enyl diphosphate. Ser-222, Ser-223, Asn-224, and Ser-266 together coordinate dimethylallyl diphosphate. Isopentenyl diphosphate-binding residues include Ser-222, Ser-223, Asn-224, and Ser-266.

The protein belongs to the IspH family. [4Fe-4S] cluster serves as cofactor.

It catalyses the reaction isopentenyl diphosphate + 2 oxidized [2Fe-2S]-[ferredoxin] + H2O = (2E)-4-hydroxy-3-methylbut-2-enyl diphosphate + 2 reduced [2Fe-2S]-[ferredoxin] + 2 H(+). The catalysed reaction is dimethylallyl diphosphate + 2 oxidized [2Fe-2S]-[ferredoxin] + H2O = (2E)-4-hydroxy-3-methylbut-2-enyl diphosphate + 2 reduced [2Fe-2S]-[ferredoxin] + 2 H(+). It functions in the pathway isoprenoid biosynthesis; dimethylallyl diphosphate biosynthesis; dimethylallyl diphosphate from (2E)-4-hydroxy-3-methylbutenyl diphosphate: step 1/1. It participates in isoprenoid biosynthesis; isopentenyl diphosphate biosynthesis via DXP pathway; isopentenyl diphosphate from 1-deoxy-D-xylulose 5-phosphate: step 6/6. Functionally, catalyzes the conversion of 1-hydroxy-2-methyl-2-(E)-butenyl 4-diphosphate (HMBPP) into a mixture of isopentenyl diphosphate (IPP) and dimethylallyl diphosphate (DMAPP). Acts in the terminal step of the DOXP/MEP pathway for isoprenoid precursor biosynthesis. In Bradyrhizobium diazoefficiens (strain JCM 10833 / BCRC 13528 / IAM 13628 / NBRC 14792 / USDA 110), this protein is 4-hydroxy-3-methylbut-2-enyl diphosphate reductase 2.